The following is a 1331-amino-acid chain: Disease resistance protein RUN1 (1331 aa).

The interval 1–20 (MASTSSSRASSSSSSSSTPS) is disordered. The 166-residue stretch at 25–190 (ITYDVFLSFR…EITDSIFRRL (166 aa)) folds into the TIR domain. Residues 34-39 (RGEDTR) and Gly-66 each bind NAD(+). The active site involves Glu-100. The 229-residue stretch at 206 to 434 (SHVKEMIWRL…REPEAEILSV (229 aa)) folds into the NB-ARC domain. 20 LRR repeats span residues 429-452 (AEIL…IFLD), 480-509 (IKNL…GWEI), 540-565 (IKRV…AFAK), 616-638 (SYEL…NFDG), 648-673 (CSNI…SYSR), 684-708 (MPNL…VGNM), 709-732 (KKLT…IGDL), 734-756 (SLEI…GGNM), 757-779 (KSLT…IGDL), 781-803 (SLKY…GGNM), 804-826 (KSLR…IRDL), 828-850 (SLER…GGNM), 851-873 (KSLM…IGDL), 875-897 (SLKY…GGNM), 898-920 (KSLT…IGDL), 922-944 (SLVS…GGNM), 945-967 (KSLN…IGDL), 969-991 (SLMR…VGNM), 992-1014 (KSLE…IGDL), and 1017-1040 (LEKL…AIDA). A Nuclear localization signal motif is present at residues 1287-1291 (RKRRR).

This sequence belongs to the disease resistance TIR-NB-LRR family.

The protein localises to the nucleus. It is found in the cytoplasm. The catalysed reaction is NAD(+) + H2O = ADP-D-ribose + nicotinamide + H(+). It catalyses the reaction NADP(+) + H2O = ADP-D-ribose 2'-phosphate + nicotinamide + H(+). Disease resistance (R) protein that confers resistance to multiple powdery and downy mildew by promoting cell death. Acts as a NAD(+) hydrolase (NADase): in response to activation, catalyzes cleavage of NAD(+) into ADP-D-ribose (ADPR) and nicotinamide; NAD(+) cleavage triggering a defense system that promotes cell death. Also able to hydrolyze NADP(+), but not other NAD(+)-related molecules. In Vitis rotundifolia (Muscadine grape), this protein is Disease resistance protein RUN1.